The chain runs to 252 residues: Adenosylcobinamide-GDP ribazoletransferase (252 aa).

6 consecutive transmembrane segments (helical) span residues 29-49 (LYWF…LGYV), 50-70 (GSLS…GIVL), 104-124 (VGSF…VAVV), 129-149 (FGLF…QVLL), 166-186 (FVAG…LALL), and 194-214 (FPTM…VGMV).

This sequence belongs to the CobS family. Mg(2+) is required as a cofactor.

The protein resides in the cell inner membrane. The catalysed reaction is alpha-ribazole + adenosylcob(III)inamide-GDP = adenosylcob(III)alamin + GMP + H(+). It carries out the reaction alpha-ribazole 5'-phosphate + adenosylcob(III)inamide-GDP = adenosylcob(III)alamin 5'-phosphate + GMP + H(+). It participates in cofactor biosynthesis; adenosylcobalamin biosynthesis; adenosylcobalamin from cob(II)yrinate a,c-diamide: step 7/7. Its function is as follows. Joins adenosylcobinamide-GDP and alpha-ribazole to generate adenosylcobalamin (Ado-cobalamin). Also synthesizes adenosylcobalamin 5'-phosphate from adenosylcobinamide-GDP and alpha-ribazole 5'-phosphate. This Chlorobium chlorochromatii (strain CaD3) protein is Adenosylcobinamide-GDP ribazoletransferase.